The following is a 597-amino-acid chain: Elongation factor 4 (597 aa).

Residues 2 to 184 (KHIRNFSIIA…KIVSAIPAPE (183 aa)) enclose the tr-type G domain. Residues 14-19 (DHGKST) and 131-134 (NKID) contribute to the GTP site.

Belongs to the TRAFAC class translation factor GTPase superfamily. Classic translation factor GTPase family. LepA subfamily.

It localises to the cell inner membrane. It carries out the reaction GTP + H2O = GDP + phosphate + H(+). Its function is as follows. Required for accurate and efficient protein synthesis under certain stress conditions. May act as a fidelity factor of the translation reaction, by catalyzing a one-codon backward translocation of tRNAs on improperly translocated ribosomes. Back-translocation proceeds from a post-translocation (POST) complex to a pre-translocation (PRE) complex, thus giving elongation factor G a second chance to translocate the tRNAs correctly. Binds to ribosomes in a GTP-dependent manner. In Vibrio vulnificus (strain CMCP6), this protein is Elongation factor 4.